A 31-amino-acid polypeptide reads, in one-letter code: Cliotide T17 (31 aa).

The segment at residues 1-31 (GTVPCGESCVFIPCITGIAGCSCKNKVCYLN) is a cross-link (cyclopeptide (Gly-Asn)). Disulfide bonds link Cys5/Cys21, Cys9/Cys23, and Cys14/Cys28.

In terms of processing, contains 3 disulfide bonds. This is a cyclic peptide. In terms of tissue distribution, expressed in root nodules but not in seed.

In terms of biological role, probably participates in a plant defense mechanism. The protein is Cliotide T17 of Clitoria ternatea (Butterfly pea).